A 292-amino-acid polypeptide reads, in one-letter code: MASFAQWVSGARPRTLPNAIAPVVAGTGAAAWLHAAVWWKALLALAVAVALVIGVNYANDYSDGIRGTDDDRVGPVRLVGSRLATPRSVLTAAMTSLALGALAGLVLALLSAPWLIAVGAICIAGAWLYTGGSKPYGYAGFGELAVFVFFGPVAVLGTQYTQALRVDWVGLAQAVATGALSCSVLVANNLRDIPTDARADKITLAVRLGDARTRMLYQGLLAVAGVLTFVLMLATPWCVVGLVAAPLALRAAGPVRSGRGGRELIPVLRDTGLAMLVWALAVAGALAFGQLS.

The next 6 helical transmembrane spans lie at Ala-35–Val-55, Ala-101–Ile-121, Gly-137–Gly-157, Val-166–Val-186, Leu-220–Val-240, and Thr-271–Leu-291.

Belongs to the MenA family. Type 1 subfamily. Mg(2+) serves as cofactor.

It localises to the cell membrane. The catalysed reaction is an all-trans-polyprenyl diphosphate + 1,4-dihydroxy-2-naphthoate + H(+) = a 2-demethylmenaquinol + CO2 + diphosphate. It participates in quinol/quinone metabolism; menaquinone biosynthesis; menaquinol from 1,4-dihydroxy-2-naphthoate: step 1/2. Activity is abolished by EDTA. Inhibited by Ro 48-8071, which is non-competitive with regard to DHNA and competitive with regard to the isoprenyldiphosphate substrate. In terms of biological role, conversion of 1,4-dihydroxy-2-naphthoate (DHNA) to demethylmenaquinone (DMK). Can use a variety of allylic isoprenyl diphosphates as substrates but has a requirement for at least three isoprene units. The sequence is that of 1,4-dihydroxy-2-naphthoate octaprenyltransferase from Mycobacterium tuberculosis (strain ATCC 25618 / H37Rv).